The chain runs to 406 residues: Arginine deiminase (406 aa).

C396 (amidino-cysteine intermediate) is an active-site residue.

This sequence belongs to the arginine deiminase family.

It is found in the cytoplasm. It carries out the reaction L-arginine + H2O = L-citrulline + NH4(+). Its pathway is amino-acid degradation; L-arginine degradation via ADI pathway; carbamoyl phosphate from L-arginine: step 1/2. The polypeptide is Arginine deiminase (Aliivibrio fischeri (strain MJ11) (Vibrio fischeri)).